Reading from the N-terminus, the 542-residue chain is 4-coumarate--CoA ligase-like 5 (542 aa).

ATP is bound by residues Ser204, Ser205, Gly206, Thr207, Thr208, and Lys212. A (E)-4-coumaroyl-AMP-binding site is contributed by Phe262. Arg282 contributes to the CoA binding site. Positions 284–353 (DFIAALRAIE…SVFPNVELVQ (70 aa)) are SBD1. 4 residues coordinate (E)-4-coumaroyl-AMP: Gly331, Gln353, Gly354, and Thr358. Residues Gln353, Gly354, Thr358, Asp418, and Arg433 each contribute to the ATP site. The SBD2 stretch occupies residues 354–397 (GYGLTESSGAVAATVGPEESKAYGSVGKLGSHLQAKIVDPSTGY). (E)-4-coumaroyl-AMP-binding residues include Lys435 and Lys439. CoA-binding residues include Lys441 and Gly442. Lys524 contributes to the ATP binding site.

This sequence belongs to the ATP-dependent AMP-binding enzyme family. The cofactor is Mg(2+).

It carries out the reaction (E)-4-coumarate + ATP + CoA = (E)-4-coumaroyl-CoA + AMP + diphosphate. The enzyme catalyses (E)-4-coumarate + ATP + H(+) = (E)-4-coumaroyl-AMP + diphosphate. It catalyses the reaction (E)-4-coumaroyl-AMP + CoA = (E)-4-coumaroyl-CoA + AMP + H(+). Its function is as follows. Carboxylate--CoA ligase that may use 4-coumarate as substrate. Follows a two-step reaction mechanism, wherein the carboxylate substrate first undergoes adenylation by ATP, followed by a thioesterification in the presence of CoA to yield the final CoA thioester. The sequence is that of 4-coumarate--CoA ligase-like 5 (4CLL5) from Oryza sativa subsp. japonica (Rice).